A 238-amino-acid polypeptide reads, in one-letter code: Capsular polysaccharide phosphotransferase eps5J (238 aa).

It belongs to the stealth family.

This Streptococcus thermophilus protein is Capsular polysaccharide phosphotransferase eps5J (eps5J).